We begin with the raw amino-acid sequence, 336 residues long: 4-hydroxythreonine-4-phosphate dehydrogenase (336 aa).

Substrate contacts are provided by H135 and T136. Residues H165, H210, and H265 each coordinate a divalent metal cation. Substrate contacts are provided by K273, N282, and R291.

Belongs to the PdxA family. Homodimer. It depends on Zn(2+) as a cofactor. Requires Mg(2+) as cofactor. Co(2+) serves as cofactor.

The protein resides in the cytoplasm. The enzyme catalyses 4-(phosphooxy)-L-threonine + NAD(+) = 3-amino-2-oxopropyl phosphate + CO2 + NADH. It participates in cofactor biosynthesis; pyridoxine 5'-phosphate biosynthesis; pyridoxine 5'-phosphate from D-erythrose 4-phosphate: step 4/5. Functionally, catalyzes the NAD(P)-dependent oxidation of 4-(phosphooxy)-L-threonine (HTP) into 2-amino-3-oxo-4-(phosphooxy)butyric acid which spontaneously decarboxylates to form 3-amino-2-oxopropyl phosphate (AHAP). In Marinobacter nauticus (strain ATCC 700491 / DSM 11845 / VT8) (Marinobacter aquaeolei), this protein is 4-hydroxythreonine-4-phosphate dehydrogenase.